Here is a 288-residue protein sequence, read N- to C-terminus: NAD kinase (288 aa).

Catalysis depends on Asp-73, which acts as the Proton acceptor. NAD(+) is bound by residues 73-74 (DG), Arg-78, 144-145 (NE), Asp-174, 185-190 (TAYSLS), and Ala-209.

This sequence belongs to the NAD kinase family. The cofactor is a divalent metal cation.

It localises to the cytoplasm. The enzyme catalyses NAD(+) + ATP = ADP + NADP(+) + H(+). In terms of biological role, involved in the regulation of the intracellular balance of NAD and NADP, and is a key enzyme in the biosynthesis of NADP. Catalyzes specifically the phosphorylation on 2'-hydroxyl of the adenosine moiety of NAD to yield NADP. This chain is NAD kinase, found in Porphyromonas gingivalis (strain ATCC BAA-308 / W83).